Reading from the N-terminus, the 122-residue chain is Small ribosomal subunit protein uS13 (122 aa).

Positions 93 to 122 (RLSLPVRGQRTKTNSRTRKGKRKTVAGKKK) are disordered. The span at 101–122 (QRTKTNSRTRKGKRKTVAGKKK) shows a compositional bias: basic residues.

Belongs to the universal ribosomal protein uS13 family. Part of the 30S ribosomal subunit. Forms a loose heterodimer with protein S19. Forms two bridges to the 50S subunit in the 70S ribosome.

Located at the top of the head of the 30S subunit, it contacts several helices of the 16S rRNA. In the 70S ribosome it contacts the 23S rRNA (bridge B1a) and protein L5 of the 50S subunit (bridge B1b), connecting the 2 subunits; these bridges are implicated in subunit movement. Contacts the tRNAs in the A and P-sites. This is Small ribosomal subunit protein uS13 from Chlamydia caviae (strain ATCC VR-813 / DSM 19441 / 03DC25 / GPIC) (Chlamydophila caviae).